Reading from the N-terminus, the 54-residue chain is Large ribosomal subunit protein bL33 (54 aa).

It belongs to the bacterial ribosomal protein bL33 family.

The chain is Large ribosomal subunit protein bL33 from Elusimicrobium minutum (strain Pei191).